A 519-amino-acid polypeptide reads, in one-letter code: Putative cytochrome P450 CYP13A1 (519 aa).

C465 provides a ligand contact to heme.

This sequence belongs to the cytochrome P450 family. Heme is required as a cofactor.

Its function is as follows. Cytochromes P450 are a group of heme-thiolate monooxygenases. They oxidize a variety of structurally unrelated compounds, including steroids, fatty acids, and xenobiotics. The sequence is that of Putative cytochrome P450 CYP13A1 (cyp-13A1) from Caenorhabditis elegans.